The following is a 578-amino-acid chain: Probable arginine--tRNA ligase, mitochondrial (578 aa).

A mitochondrion-targeting transit peptide spans 1-16 (MACGFRRAIACQLSRV). Residues 133–135 (SPN), histidine 144, tyrosine 322, aspartate 326, and glutamine 350 each bind L-arginine. The 'HIGH' region signature appears at 133 to 144 (SPNVAKKFHVGH). An N6-acetyllysine modification is found at lysine 568.

The protein belongs to the class-I aminoacyl-tRNA synthetase family.

Its subcellular location is the mitochondrion membrane. It carries out the reaction tRNA(Arg) + L-arginine + ATP = L-arginyl-tRNA(Arg) + AMP + diphosphate. Functionally, catalyzes the attachment of arginine to tRNA(Arg) in a two-step reaction: arginine is first activated by ATP to form Arg-AMP and then transferred to the acceptor end of tRNA(Arg). This is Probable arginine--tRNA ligase, mitochondrial (RARS2) from Pongo abelii (Sumatran orangutan).